A 106-amino-acid chain; its full sequence is UPF0145 protein FTL_1249 (106 aa).

The protein belongs to the UPF0145 family.

The protein is UPF0145 protein FTL_1249 of Francisella tularensis subsp. holarctica (strain LVS).